A 140-amino-acid polypeptide reads, in one-letter code: Large ribosomal subunit protein bL21 (140 aa).

The tract at residues 106–140 (SGVKPAVGARTKIEPAVKPAKAKKSEAEASAEDAN) is disordered.

The protein belongs to the bacterial ribosomal protein bL21 family. As to quaternary structure, part of the 50S ribosomal subunit. Contacts protein L20.

In terms of biological role, this protein binds to 23S rRNA in the presence of protein L20. The chain is Large ribosomal subunit protein bL21 from Paracoccus denitrificans (strain Pd 1222).